Here is a 734-residue protein sequence, read N- to C-terminus: Photosystem I P700 chlorophyll a apoprotein A2 (734 aa).

Helical transmembrane passes span Ile-46–Ala-69, Leu-135–Gln-158, Leu-175–Ile-199, Ile-273–Tyr-291, Leu-330–Tyr-353, Ala-369–Val-395, Ala-417–His-439, and Phe-517–Val-535. Residues Cys-559 and Cys-568 each coordinate [4Fe-4S] cluster. 2 consecutive transmembrane segments (helical) span residues Ala-575 to Trp-596 and Gln-643 to Ile-665. Chlorophyll a is bound by residues His-654, Met-662, and Tyr-670. Position 671 (Trp-671) interacts with phylloquinone. A helical transmembrane segment spans residues Leu-707 to Ala-727.

The protein belongs to the PsaA/PsaB family. As to quaternary structure, the PsaA/B heterodimer binds the P700 chlorophyll special pair and subsequent electron acceptors. PSI consists of a core antenna complex that captures photons, and an electron transfer chain that converts photonic excitation into a charge separation. The eukaryotic PSI reaction center is composed of at least 11 subunits. Requires P700 is a chlorophyll a/chlorophyll a' dimer, A0 is one or more chlorophyll a, A1 is one or both phylloquinones and FX is a shared 4Fe-4S iron-sulfur center. as cofactor.

It localises to the plastid. It is found in the chloroplast thylakoid membrane. It carries out the reaction reduced [plastocyanin] + hnu + oxidized [2Fe-2S]-[ferredoxin] = oxidized [plastocyanin] + reduced [2Fe-2S]-[ferredoxin]. Its function is as follows. PsaA and PsaB bind P700, the primary electron donor of photosystem I (PSI), as well as the electron acceptors A0, A1 and FX. PSI is a plastocyanin/cytochrome c6-ferredoxin oxidoreductase, converting photonic excitation into a charge separation, which transfers an electron from the donor P700 chlorophyll pair to the spectroscopically characterized acceptors A0, A1, FX, FA and FB in turn. Oxidized P700 is reduced on the lumenal side of the thylakoid membrane by plastocyanin or cytochrome c6. This Emiliania huxleyi (Coccolithophore) protein is Photosystem I P700 chlorophyll a apoprotein A2.